The primary structure comprises 323 residues: MIRVLLANPRGFCAGVDRAIEIVERALAMYGAPIYVRHEVVHNRFVVEDLEKKGAVFVENLEEVPEGSMLIFSAHGVSHEVRREAAARKLQIFDATCPLVTKVHVEVAKMDKEGKEIVMIGHQGHPEVEGTMGQIAKSKGTMYLVETAEDVARLQVKNESNLAYVTQTTLSVDDAARVIEALKQRFPKIIGPKKDDICYATQNRQDAVKKLVKLCDLVVVVGSPNSSNSNRLCEVARNENVEAYMVDQAEQLQESWLTNKRCIGITAGASAPEILVQQVLERLEQIAAKQSNQGVIIEELSGVLESVTFPLPKAEPVSFNKYI.

Cys-13 provides a ligand contact to [4Fe-4S] cluster. (2E)-4-hydroxy-3-methylbut-2-enyl diphosphate is bound by residues His-42 and His-75. Positions 42 and 75 each coordinate dimethylallyl diphosphate. 2 residues coordinate isopentenyl diphosphate: His-42 and His-75. Cys-97 is a [4Fe-4S] cluster binding site. A (2E)-4-hydroxy-3-methylbut-2-enyl diphosphate-binding site is contributed by His-125. His-125 contributes to the dimethylallyl diphosphate binding site. Isopentenyl diphosphate is bound at residue His-125. Glu-127 (proton donor) is an active-site residue. Thr-168 lines the (2E)-4-hydroxy-3-methylbut-2-enyl diphosphate pocket. Cys-198 provides a ligand contact to [4Fe-4S] cluster. (2E)-4-hydroxy-3-methylbut-2-enyl diphosphate is bound by residues Ser-226, Ser-227, Asn-228, and Ser-270. 4 residues coordinate dimethylallyl diphosphate: Ser-226, Ser-227, Asn-228, and Ser-270. The isopentenyl diphosphate site is built by Ser-226, Ser-227, Asn-228, and Ser-270.

Belongs to the IspH family. [4Fe-4S] cluster is required as a cofactor.

The catalysed reaction is isopentenyl diphosphate + 2 oxidized [2Fe-2S]-[ferredoxin] + H2O = (2E)-4-hydroxy-3-methylbut-2-enyl diphosphate + 2 reduced [2Fe-2S]-[ferredoxin] + 2 H(+). It catalyses the reaction dimethylallyl diphosphate + 2 oxidized [2Fe-2S]-[ferredoxin] + H2O = (2E)-4-hydroxy-3-methylbut-2-enyl diphosphate + 2 reduced [2Fe-2S]-[ferredoxin] + 2 H(+). It functions in the pathway isoprenoid biosynthesis; dimethylallyl diphosphate biosynthesis; dimethylallyl diphosphate from (2E)-4-hydroxy-3-methylbutenyl diphosphate: step 1/1. It participates in isoprenoid biosynthesis; isopentenyl diphosphate biosynthesis via DXP pathway; isopentenyl diphosphate from 1-deoxy-D-xylulose 5-phosphate: step 6/6. In terms of biological role, catalyzes the conversion of 1-hydroxy-2-methyl-2-(E)-butenyl 4-diphosphate (HMBPP) into a mixture of isopentenyl diphosphate (IPP) and dimethylallyl diphosphate (DMAPP). Acts in the terminal step of the DOXP/MEP pathway for isoprenoid precursor biosynthesis. This is 4-hydroxy-3-methylbut-2-enyl diphosphate reductase from Nitrosomonas europaea (strain ATCC 19718 / CIP 103999 / KCTC 2705 / NBRC 14298).